The following is a 577-amino-acid chain: MESFFVFFTAAALPVVVAAAVIAGLCITAAWLARPRRVAEVFRRQGIDGPPPSSFLAGNLPEMKARVAAAASAAAPTADGEETASAGGGGGGRDFEKDGFDDYCTRIFPYFHKWRKAYGETYLYWLRRRPALYVTDPELIGEIGRCVSLDMGKPKYLQKGQEPLFGGGVLKANGACWARQRKVIAPEFYMARVRAMVQLMVDAAQPLIASWESRIDAAGGAAAAEVVVDGDLRSFSFDVISRACFGSDYSRGREIFLRLRELSGLMSETSVIFSIPSLRHLPTGKNRRIWRLTGEIRSLIMELVRERRCAARAAREHGGKAAPPSPPERDFLGSIIENSGGQPRPDDFVVDNCKNIYFAGHETSAVTATWCLMLLAAHPEWQDRARAEVLEVCGGDGAAAPAAPDFDMVSRMRTVGMVVQETLRLFPPSSFVVRETFRDMQLGRLLAPKGTYLFVPVSTMHHDVAAWGPTARLFDPSRFRDGVAAACKHPQASFMPFGLGARTCLGQNLALVEVKTLVAVVLARFEFTLSPEYRHSPAFRLIIEPEFGLRLRIRRAGGQDATSQVDTSTAPVHSSHN.

Topologically, residues M1–S3 are lumenal. The helical; Signal-anchor for type III membrane protein transmembrane segment at F4–G24 threads the bilayer. Residues L25–N577 lie on the Cytoplasmic side of the membrane. The interval R315–P343 is disordered. Heme is bound at residue C504.

This sequence belongs to the cytochrome P450 family. The cofactor is heme. As to expression, expressed in rapidly elongating or dividing tissues, including the shoot apical meristem, the intercalary meristem and elongating zones of internodes, and panicle but not in young seedlings, roots and leaves. During the heading stage, the highest expression is detected in the flowering spikelets, anthers, the divisional zone and the node of the uppermost internode.

The protein resides in the endoplasmic reticulum membrane. Functionally, catalyzes the 16alpha,17-epoxidation on non-13-hydroxylated gibberellins (GAs), including GA4, GA9, and GA12. No activity with GA1, GA20, GA53 or ent-kaurenoic acid. Reduces the biological activity of GAs. The polypeptide is Cytochrome P450 714D1 (CYP714D1) (Oryza sativa subsp. japonica (Rice)).